Reading from the N-terminus, the 471-residue chain is Secretogranin-3 (471 aa).

A signal peptide spans 1–22; sequence MGFLWTGTWIVVLMLHSSPIQA. Disordered stretches follow at residues 23-72 and 86-105; these read FPKP…ESNY and EKEKNEKERQSVKISPNDNK. The segment covering 32 to 45 has biased composition (basic and acidic residues); it reads KPLHNRELSAERPL. Phosphoserine is present on S40. O-linked (Xyl...) (chondroitin sulfate) serine glycosylation is present at S40. A glycan (N-linked (GlcNAc...) asparagine) is linked at N71. Residues 86–96 show a composition bias toward basic and acidic residues; sequence EKEKNEKERQS. An N-linked (GlcNAc...) asparagine glycan is attached at N353. Positions 357 to 409 are disordered; sequence LFAVPSEKSHEETDSTKEEAAKMEKEYGTLKDSTKDDDSNPRGKTDEHKGKTE. Positions 363–409 are enriched in basic and acidic residues; the sequence is EKSHEETDSTKEEAAKMEKEYGTLKDSTKDDDSNPRGKTDEHKGKTE. A Phosphoserine modification is found at S365.

Interacts with CHGA. Interacts with secretogranin II/SCG2. Interacts (via C-terminus) with CPE.

The protein localises to the cytoplasmic vesicle. The protein resides in the secretory vesicle. Its subcellular location is the secretory vesicle membrane. It is found in the secreted. Its function is as follows. Member of the granin protein family that regulates the biogenesis of secretory granules. Acts as a sorting receptor for intragranular proteins including chromogranin A/CHGA. May also play a role in angiogenesis. Promotes endothelial proliferation, migration and tube formation through MEK/ERK signaling pathway. The chain is Secretogranin-3 (SCG3) from Bos taurus (Bovine).